We begin with the raw amino-acid sequence, 445 residues long: AVMGRNLALNIESRGYTVSVFNRSREKTEEVIAENPGKKLVPYYTVQEFVESLETPRRILLMVKAGAGTDSAIDSLKPYLDKGDIIIDGGNTFFQDTIRRNRELSEEGFNFIGTGVSGGEEGALKGPSIMPGGQKEAYELVAPILKQIAAVAEDGEPCVTYIGADGAGHYVKMVHNGIEYGDMQLIAEAYSLLKGGLNLSNEELATTFSEWNKGELSSYLIDITKDIFTKKDEEGKYLVDVILDEAANKGTGKWTSQSSLDLGEPLSLITESVFARYISSLKTQRVAASKVLTGPQAQPAGDKAEFIEKVRRALYLGKIVSYAQGFSQLRAASDEYNWDLNYGEIAKIFRAGCIIRAQFLQKITDAYAENPAIANLLLAPYFKQIADDYQQALRDVVSYAVQNGIPVPTFSAAVAYYDSYRAAVLPANLIQAQRDYFGAHTYKRT.

NADP(+) contacts are provided by residues 1-4 (AVMG), 22-24 (NRS), 63-65 (VKA), and N91. Residues N91 and 117 to 119 (SGG) contribute to the substrate site. Residue K172 is the Proton acceptor of the active site. A substrate-binding site is contributed by 175–176 (HN). The active-site Proton donor is the E179. Residues Y180, K249, R276, R434, and H440 each coordinate substrate.

It belongs to the 6-phosphogluconate dehydrogenase family. Homodimer.

The enzyme catalyses 6-phospho-D-gluconate + NADP(+) = D-ribulose 5-phosphate + CO2 + NADPH. Its pathway is carbohydrate degradation; pentose phosphate pathway; D-ribulose 5-phosphate from D-glucose 6-phosphate (oxidative stage): step 3/3. Its function is as follows. Catalyzes the oxidative decarboxylation of 6-phosphogluconate to ribulose 5-phosphate and CO(2), with concomitant reduction of NADP to NADPH. This Citrobacter amalonaticus protein is 6-phosphogluconate dehydrogenase, decarboxylating (gnd).